Consider the following 341-residue polypeptide: HTH-type transcriptional repressor PurR (341 aa).

Residues 2 to 56 (ATIKDVAKRANVSTTTVSHVINKTRFVAEETRNAVWAAIKELHYSPSAVARSLKV) form the HTH lacI-type domain. Positions 4 to 23 (IKDVAKRANVSTTTVSHVIN) form a DNA-binding region, H-T-H motif. The DNA-binding element occupies 48–56 (SAVARSLKV). Hypoxanthine-binding residues include Tyr73, Arg190, Thr192, Phe221, and Asp275.

Homodimer.

Its pathway is purine metabolism; purine nucleotide biosynthesis [regulation]. Is the main repressor of the genes involved in the de novo synthesis of purine nucleotides, regulating purB, purC, purEK, purF, purHD, purL, purMN and guaBA expression. PurR is allosterically activated to bind its cognate DNA by binding the purine corepressors, hypoxanthine or guanine, thereby effecting transcription repression. This chain is HTH-type transcriptional repressor PurR, found in Salmonella typhi.